A 242-amino-acid polypeptide reads, in one-letter code: Caspase-14 (242 aa).

Positions 1-5 (MSNPR) are excised as a propeptide. Residues His-89 and Cys-132 contribute to the active site. The propeptide occupies 147–152 (EIVMVI).

Belongs to the peptidase C14A family. In terms of assembly, heterodimer of a large and a small subunit, both processed from the precursor; the mature active form is a p17/p10 dimer and the intermediate form a p20/p8 dimer. In terms of processing, maturation by proteolytic processing appears to be a two-step process. The precursor is processed by KLK7 to yield the p20/p8 intermediate form which acts on the precursor to yield the p17/p10 mature form. Initially, cleavage between Ile-152 and Lys-153 has been proposed to yield the large and small subunits of the active enzyme. As to expression, expressed in keratinocytes of adult skin suprabasal layers (from spinous layers to the stratum granulosum and stratum corneum) (at protein level). Expressed in keratinocytes of hair shaft and sebaceous glands (at protein level). In psoriatic skin only expressed at very low levels. The p17/10 mature form is expressed in epidermis stratum corneum, the p20/p8 intermediate form in epidermis upper granular cells of the stratum granulosum.

The protein localises to the cytoplasm. The protein resides in the nucleus. Inhibited by caspase-1 inhibitor YVAD-FMK and the pan-caspase inhibitor VAD-FMK. Functionally, non-apoptotic caspase involved in epidermal differentiation. Is the predominant caspase in epidermal stratum corneum. Seems to play a role in keratinocyte differentiation and is required for cornification. Regulates maturation of the epidermis by proteolytically processing filaggrin. In vitro has a preference for the substrate [WY]-X-X-D motif and is active on the synthetic caspase substrate WEHD-ACF. Involved in processing of prosaposin in the epidermis. May be involved in retinal pigment epithelium cell barrier function. Involved in DNA degradation in differentiated keratinocytes probably by cleaving DFFA/ICAD leading to liberation of DFFB/CAD. The sequence is that of Caspase-14 (CASP14) from Homo sapiens (Human).